We begin with the raw amino-acid sequence, 269 residues long: C-type lectin domain family 2 member G (269 aa).

The Cytoplasmic segment spans residues 1-107 (MNITRASLPM…SPESSAKLYC (107 aa)). The chain crosses the membrane as a helical; Signal-anchor for type II membrane protein span at residues 108 to 128 (CCGVIMVLTVAVVALSVALPA). Over 129–269 (TKTEQILINK…SLHCPTPVPV (141 aa)) the chain is Extracellular. One can recognise a C-type lectin domain in the interval 150–254 (VGNKCFYFSE…HYIPRIWICS (105 aa)). The N-linked (GlcNAc...) asparagine glycan is linked to Asn-163. A disulfide bridge connects residues Cys-171 and Cys-253.

As to expression, detected in vagina, eye, tongue, stomach and spleen.

The protein resides in the cell membrane. Inhibits osteoclast formation. In Mus musculus (Mouse), this protein is C-type lectin domain family 2 member G (Clec2g).